The chain runs to 1314 residues: Angiotensin-converting enzyme (1314 aa).

The first 35 residues, Met-1–Ala-35, serve as a signal peptide directing secretion. Residues Leu-36–Gln-1265 lie on the Extracellular side of the membrane. N-linked (GlcNAc...) asparagine glycosylation is found at Asn-44, Asn-60, Asn-80, Asn-117, and Asn-166. Peptidase M2 domains are found at residues Ser-46 to Pro-630 and Val-649 to Pro-1228. A disulfide bridge connects residues Cys-163 and Cys-171. Tyr-237 serves as a coordination point for chloride. N-linked (GlcNAc...) asparagine glycosylation is present at Asn-324. Cysteines 365 and 383 form a disulfide. His-396 contributes to the Zn(2+) binding site. The Proton acceptor 1 role is filled by Glu-397. His-400 and Glu-424 together coordinate Zn(2+). The N-linked (GlcNAc...) asparagine glycan is linked to Asn-515. The Proton donor 1 role is filled by His-526. Arg-535 provides a ligand contact to chloride. Cys-551 and Cys-563 are oxidised to a cystine. N-linked (GlcNAc...) asparagine glycans are attached at residues Asn-683, Asn-701, Asn-720, and Asn-766. A disulfide bridge links Cys-763 with Cys-769. Arg-797 and Tyr-835 together coordinate chloride. A glycan (N-linked (GlcNAc...) asparagine) is linked at Asn-948. A disulfide bridge links Cys-963 with Cys-981. Zn(2+) is bound at residue His-994. Catalysis depends on Glu-995, which acts as the Proton acceptor 2. Zn(2+) contacts are provided by His-998 and Glu-1022. Trp-1096 and Arg-1100 together coordinate chloride. His-1124 (proton donor 2) is an active-site residue. Arg-1133 lines the chloride pocket. An intrachain disulfide couples Cys-1149 to Cys-1161. Asn-1197 carries N-linked (GlcNAc...) asparagine glycosylation. The juxtamembrane stalk stretch occupies residues His-1221–Arg-1262. A helical membrane pass occupies residues Trp-1266 to Leu-1282. Topologically, residues Thr-1283 to Ser-1314 are cytoplasmic. The disordered stretch occupies residues Gly-1293 to Ser-1314. Ser-1307 bears the Phosphoserine mark.

It belongs to the peptidase M2 family. In terms of assembly, monomer and homodimer; homodimerizes following binding to an inhibitor. Interacts with calmodulin (CALM1, CALM2 or CALM3); interaction takes place in the cytoplasmic region and regulates phosphorylation and proteolytic cleavage. Requires Zn(2+) as cofactor. It depends on chloride as a cofactor. Post-translationally, produced following proteolytic cleavage by secretase enzymes that cleave the transmembrane form in the juxtamembrane stalk region upstream of the transmembrane region. Cleavage can take place at different sites of the juxtamembrane stalk region. Phosphorylated by CK2 on Ser-1307; which allows membrane retention. Phosphorylated on tyrosine residues on its extracellular part, promoting cleavage by secretase enzymes and formation of the soluble form (Angiotensin-converting enzyme, soluble form). In terms of tissue distribution, widely expressed with dominant expression in lung and kidney.

The protein localises to the cell membrane. Its subcellular location is the cytoplasm. The protein resides in the secreted. The enzyme catalyses Release of a C-terminal dipeptide, oligopeptide-|-Xaa-Yaa, when Xaa is not Pro, and Yaa is neither Asp nor Glu. Thus, conversion of angiotensin I to angiotensin II, with increase in vasoconstrictor activity, but no action on angiotensin II.. It catalyses the reaction angiotensin I + H2O = L-histidyl-L-leucine + angiotensin II. The catalysed reaction is bradykinin + H2O = L-Phe-L-Arg + bradykinin(1-7). It carries out the reaction substance P + H2O = substance P(1-9) + L-Leu-L-Met-NH2. The enzyme catalyses substance P + H2O = substance P(1-8) + Gly-L-Leu-L-Met-NH2. It catalyses the reaction substance P + H2O = L-Phe-L-Phe-Gly-L-Leu-L-Met-NH2 + substance P(1-6). The catalysed reaction is neurotensin + H2O = neurotensin(1-11) + L-isoleucyl-L-leucine. It carries out the reaction goralatide + H2O = N-acetyl-L-seryl-L-aspartate + L-lysyl-L-proline. The enzyme catalyses Met-enkephalin + H2O = L-phenylalanyl-L-methionine + L-tyrosylglycylglycine. It catalyses the reaction Leu-enkephalin + H2O = L-tyrosylglycylglycine + L-phenylalanyl-L-leucine. The catalysed reaction is Met-enkephalin-Arg-Phe + H2O = L-arginyl-L-phenylalanine + Met-enkephalin. Its activity is regulated as follows. The dipeptidyl carboxypeptidase activity is strongly activated by chloride. The dipeptidyl carboxypeptidase activity is specifically inhibited by lisinopril, captopril and enalaprilat. Strongly inhibited by lisinopril and captopril. Functionally, dipeptidyl carboxypeptidase that removes dipeptides from the C-terminus of a variety of circulating hormones, such as angiotensin I, bradykinin or enkephalins, thereby playing a key role in the regulation of blood pressure, electrolyte homeostasis or synaptic plasticity. Composed of two similar catalytic domains, each possessing a functional active site, with different selectivity for substrates. Plays a major role in the angiotensin-renin system that regulates blood pressure and sodium retention by the kidney by converting angiotensin I to angiotensin II, resulting in an increase of the vasoconstrictor activity of angiotensin. Also able to inactivate bradykinin, a potent vasodilator, and therefore enhance the blood pressure response. Acts as a regulator of synaptic transmission by mediating cleavage of neuropeptide hormones, such as substance P, neurotensin or enkephalins. Catalyzes degradation of different enkephalin neuropeptides (Met-enkephalin, Leu-enkephalin, Met-enkephalin-Arg-Phe and possibly Met-enkephalin-Arg-Gly-Leu). Acts as a regulator of synaptic plasticity in the nucleus accumbens of the brain by mediating cleavage of Met-enkephalin-Arg-Phe, a strong ligand of Mu-type opioid receptor OPRM1, into Met-enkephalin. Met-enkephalin-Arg-Phe cleavage by ACE decreases activation of OPRM1, leading to long-term synaptic potentiation of glutamate release. Also acts as a regulator of hematopoietic stem cell differentiation by mediating degradation of hemoregulatory peptide N-acetyl-SDKP (AcSDKP). Acts as a regulator of cannabinoid signaling pathway by mediating degradation of hemopressin, an antagonist peptide of the cannabinoid receptor CNR1. Involved in amyloid-beta metabolism by catalyzing degradation of Amyloid-beta protein 40 and Amyloid-beta protein 42 peptides, thereby preventing plaque formation. Catalyzes cleavage of cholecystokinin (maturation of Cholecystokinin-8 and Cholecystokinin-5) and Gonadoliberin-1 (both maturation and degradation) hormones. Degradation of hemoregulatory peptide N-acetyl-SDKP (AcSDKP) and amyloid-beta proteins is mediated by the N-terminal catalytic domain, while angiotensin I and cholecystokinin cleavage is mediated by the C-terminal catalytic region. In terms of biological role, soluble form that is released in blood plasma and other body fluids following proteolytic cleavage in the juxtamembrane stalk region. Isoform produced by alternative promoter usage that is specifically expressed in spermatocytes and adult testis, and which is required for male fertility. In contrast to somatic isoforms, only contains one catalytic domain. Acts as a dipeptidyl carboxypeptidase that removes dipeptides from the C-terminus of substrates. The identity of substrates that are needed for male fertility is unknown. May also have a glycosidase activity which releases GPI-anchored proteins from the membrane by cleaving the mannose linkage in the GPI moiety. The GPIase activity was reported to be essential for the egg-binding ability of the sperm. This activity is however unclear and has been challenged by other groups, suggesting that it may be indirect. The chain is Angiotensin-converting enzyme from Mesocricetus auratus (Golden hamster).